A 314-amino-acid polypeptide reads, in one-letter code: Glycerate dehydrogenase (314 aa).

Residues Thr-74, 157–158, 228–230, and Asp-254 each bind NAD(+); these read AL and TAR. Residue Arg-230 is part of the active site. Residue Glu-259 is part of the active site. Residue His-280 is the Proton donor of the active site. 280-283 contributes to the NAD(+) binding site; that stretch reads HVAW.

Belongs to the D-isomer specific 2-hydroxyacid dehydrogenase family. In terms of assembly, homodimer.

The protein resides in the cytoplasm. It catalyses the reaction (R)-glycerate + NAD(+) = 3-hydroxypyruvate + NADH + H(+). It functions in the pathway one-carbon metabolism; formaldehyde assimilation via serine pathway. Its function is as follows. Plays a central role in assimilation of carbon. It converts hydroxypyruvate to glycerate as a key step in the serine cycle, and may also play an important role in C2 reactions, by interconverting glyoxylate and glycolate. In Methylorubrum extorquens (strain ATCC 14718 / DSM 1338 / JCM 2805 / NCIMB 9133 / AM1) (Methylobacterium extorquens), this protein is Glycerate dehydrogenase (hprA).